A 256-amino-acid polypeptide reads, in one-letter code: 5'-nucleotidase SurE (256 aa).

D8, D9, S39, and N91 together coordinate a divalent metal cation.

This sequence belongs to the SurE nucleotidase family. Requires a divalent metal cation as cofactor.

It is found in the cytoplasm. The enzyme catalyses a ribonucleoside 5'-phosphate + H2O = a ribonucleoside + phosphate. Functionally, nucleotidase that shows phosphatase activity on nucleoside 5'-monophosphates. This Marinobacter nauticus (strain ATCC 700491 / DSM 11845 / VT8) (Marinobacter aquaeolei) protein is 5'-nucleotidase SurE.